A 56-amino-acid polypeptide reads, in one-letter code: Large ribosomal subunit protein bL32 (56 aa).

Residues 1–26 are disordered; it reads MAVQQNKKSRSKRGMRRSHDALSTAQ. Residues 7 to 16 are compositionally biased toward basic residues; sequence KKSRSKRGMR.

The protein belongs to the bacterial ribosomal protein bL32 family.

The sequence is that of Large ribosomal subunit protein bL32 from Shewanella amazonensis (strain ATCC BAA-1098 / SB2B).